Consider the following 249-residue polypeptide: Sodium channel modifier 1 (249 aa).

The short motif at 4–20 (KREGDDQSQLNILKKRR) is the Bipartite nuclear localization signal element. The Matrin-type zinc finger occupies 42-74 (YSCLVCSHRPVFDTVDMLVVHRKGKRHLEGMKW). Residues 94-103 (YVKAEDDRQE) show a composition bias toward basic and acidic residues. Disordered stretches follow at residues 94-116 (YVKAEDDRQEPSSSAPLLTQTRK), 128-199 (YSSC…PLTE), and 228-249 (ENVEFDSDEEEPTLLPPCSESS). The span at 104 to 115 (PSSSAPLLTQTR) shows a compositional bias: polar residues. Residues 134-149 (KASERSESSSKEHRND) show a composition bias toward basic and acidic residues. The span at 150–170 (LANSHLSMRTESNDSRTTVHQ) shows a compositional bias: polar residues. The span at 230 to 239 (VEFDSDEEEP) shows a compositional bias: acidic residues.

In terms of assembly, component of the minor spliceosome, which splices U12-type introns.

Its subcellular location is the nucleus. The protein localises to the nucleoplasm. It is found in the nucleus speckle. As a component of the minor spliceosome, involved in the splicing of U12-type introns in pre-mRNAs. The protein is Sodium channel modifier 1 (scnm1) of Danio rerio (Zebrafish).